The primary structure comprises 360 residues: MQDFLRQQLERYAQRLEELNFLLSREDIMGDMKQYRAISREHADVTAIAGRYARHRQREADLAAAQDMLSDPDMADMAQEEIASAEAELVQLEDELQRLLLPKDPDDARNAYLEIRAGTGGDESALFAGDLARMYTRHCDAVGWKVEIMSANESELGGYKEVVLRVEGTDVYGRLRFESGGHRVQRVPATETQGRIHTSACTVAVMPEPDETQAITLNPADLRIDTFRASGAGGQHINKTDSAVRVVHLPTGIVAECQDGRSQHSNKAKALQVLQARLQEKERSEREAKEAALRKGLIGSGDRSDRIRTYNFPQGRLTDHRINLTIYKLLAVMEGDLGDVLDALQAAREAELLAELQVNN.

Residue Q235 is modified to N5-methylglutamine.

Belongs to the prokaryotic/mitochondrial release factor family. Post-translationally, methylated by PrmC. Methylation increases the termination efficiency of RF1.

It localises to the cytoplasm. Peptide chain release factor 1 directs the termination of translation in response to the peptide chain termination codons UAG and UAA. The polypeptide is Peptide chain release factor 1 (Delftia acidovorans (strain DSM 14801 / SPH-1)).